The chain runs to 457 residues: Paired box protein Pax-8 (457 aa).

The paired DNA-binding region spans 9 to 135 (GHGGLNQLGG…SSINRIIRTK (127 aa)). Positions 12-68 (GLNQLGGAFVNGRPLPEVVRQRIVDLAHQGVRPCDISRQLRVSHGCVSKILGRYYET) are PAI subdomain. The RED subdomain stretch occupies residues 87–135 (KVVEKIGDYKRQNPTMFAWEIRDRLLAEGVCDNDTVPSVSSINRIIRTK). Over residues 159–182 (LIPSSAVTPPESPQSDSLGSTYSI) the composition is skewed to polar residues. The tract at residues 159–226 (LIPSSAVTPP…SSGPRKHLRT (68 aa)) is disordered. Ser-304 carries the phosphoserine modification.

Interacts with WWTR1.

The protein localises to the nucleus. Its function is as follows. Thought to encode a transcription factor. It may have a role in kidney cell differentiation. May play a regulatory role in mammalian development. The chain is Paired box protein Pax-8 (Pax8) from Rattus norvegicus (Rat).